Consider the following 537-residue polypeptide: Fucosyltransferase 6 (537 aa).

Residues 1-20 (MYHIFQISSEVFRAFGLKMK) lie on the Cytoplasmic side of the membrane. The helical; Signal-anchor for type II membrane protein transmembrane segment at 21-41 (ILLTLVFSGLLIWSVVLVSFS) threads the bilayer. Residues 42 to 537 (NDFNNQLLVA…NDGLKLFDEL (496 aa)) lie on the Lumenal side of the membrane. N-linked (GlcNAc...) asparagine glycosylation is found at Asn-54, Asn-231, and Asn-378.

Belongs to the glycosyltransferase 37 family. As to expression, expressed in roots and flowers.

Its subcellular location is the golgi apparatus. It localises to the golgi stack membrane. It functions in the pathway protein modification; protein glycosylation. In terms of biological role, may be involved in cell wall biosynthesis. May act as a fucosyltransferase. The sequence is that of Fucosyltransferase 6 (FUT6) from Arabidopsis thaliana (Mouse-ear cress).